The sequence spans 156 residues: Small ribosomal subunit protein uS7 (156 aa).

The protein belongs to the universal ribosomal protein uS7 family. In terms of assembly, part of the 30S ribosomal subunit. Contacts proteins S9 and S11.

Its function is as follows. One of the primary rRNA binding proteins, it binds directly to 16S rRNA where it nucleates assembly of the head domain of the 30S subunit. Is located at the subunit interface close to the decoding center, probably blocks exit of the E-site tRNA. The polypeptide is Small ribosomal subunit protein uS7 (Bacillus cereus (strain G9842)).